We begin with the raw amino-acid sequence, 755 residues long: Oligopeptide transporter 1 (755 aa).

Helical transmembrane passes span 58–78 (TWTL…FFGF), 82–102 (QLWV…KLMA), 134–154 (ITIF…ITIV), 165–185 (AAAM…AGIF), 226–246 (FFII…YLFP), 298–318 (FFAI…VLPI), 370–390 (YLSV…CATI), 434–454 (WWFI…CEGF), 462–482 (WWGL…IGVI), 546–566 (FIVQ…TTWW), 614–634 (GIYP…VPFW), 664–684 (AKAV…YYIF), and 697–717 (ILSA…FFAF).

Belongs to the oligopeptide OPT transporter (TC 2.A.67.1) family. Highly expressed in flowers, and moderately expressed in leaves and stems.

It localises to the membrane. Functionally, involved in the translocation of tetra- and pentapeptides across the cellular membrane in an energy-dependent manner. This chain is Oligopeptide transporter 1 (OPT1), found in Arabidopsis thaliana (Mouse-ear cress).